The sequence spans 224 residues: Testis-expressed protein 30 (224 aa).

The sequence is that of Testis-expressed protein 30 (TEX30) from Bos taurus (Bovine).